Reading from the N-terminus, the 239-residue chain is Glycerol-3-phosphate acyltransferase (239 aa).

6 consecutive transmembrane segments (helical) span residues 6–26 (AIALLIVFSLVIGYLMGSVMF), 61–81 (FLVGLCDALKGFLAFVFSFLI), 99–119 (YYLTYLSCFAATIGHIFPLYF), 135–155 (LAISLWWFVICLVLWLLVTLI), 159–179 (VSLASLVTFFILAIIILVPWL), and 199–219 (WYIILFFVLWYWPLTIAVFWL).

Belongs to the PlsY family. In terms of assembly, probably interacts with PlsX.

The protein resides in the cell membrane. It carries out the reaction an acyl phosphate + sn-glycerol 3-phosphate = a 1-acyl-sn-glycero-3-phosphate + phosphate. It participates in lipid metabolism; phospholipid metabolism. Functionally, catalyzes the transfer of an acyl group from acyl-phosphate (acyl-PO(4)) to glycerol-3-phosphate (G3P) to form lysophosphatidic acid (LPA). This enzyme utilizes acyl-phosphate as fatty acyl donor, but not acyl-CoA or acyl-ACP. The sequence is that of Glycerol-3-phosphate acyltransferase from Mycoplasma pneumoniae (strain ATCC 29342 / M129 / Subtype 1) (Mycoplasmoides pneumoniae).